The following is a 420-amino-acid chain: MFGRGPSKKSDNTKFYEILGVPKSASPEDLKKAYKKAAIKNHPDKGGDPEKFKELAQAYEVLSDPEKREIYDQYGEDALKEGMGGGGGGHDPFDIFSSFFGGGPFGGNTSRQRRQRRGEDVVHPLKVSLEDVYLGTMKKLSLSRNALCSKCNGKGSKSGASLKCGGCQGSGMKVSIRQLGPGMIQQMQHACNECKGTGETINDRDRCPQCKGDKVIPEKKVLEVNVEKGMQHSQKITFEGQADEAPDTVTGDIVFVLQQKEHPKFKRKGEDLFVEHTLSLTEALCGFQFVLTHLDGRSLLIKSNPGEVVKPDSYKAISDEGMPIYQRPFMKGKLYIHFTVEFPDSLSPDQTKALEAVLPKPSTAQLSDMEIDECEETTLHDVNIEDEMRRKAQAQREAYDDDDEDDDHPGGAQRVQCAQQ.

The J domain occupies 14-75 (KFYEILGVPK…EKREIYDQYG (62 aa)). A CR-type zinc finger spans residues 135–219 (GTMKKLSLSR…CKGDKVIPEK (85 aa)). The Zn(2+) site is built by Cys-148, Cys-151, Cys-164, Cys-167, Cys-191, Cys-194, Cys-207, and Cys-210. 4 CXXCXGXG motif repeats span residues 148-155 (CSKCNGKG), 164-171 (CGGCQGSG), 191-198 (CNECKGTG), and 207-214 (CPQCKGDK). The interval 376 to 420 (ETTLHDVNIEDEMRRKAQAQREAYDDDDEDDDHPGGAQRVQCAQQ) is disordered. Residues 377-390 (TTLHDVNIEDEMRR) show a composition bias toward basic and acidic residues. The residue at position 417 (Cys-417) is a Cysteine methyl ester. A lipid anchor (S-farnesyl cysteine) is attached at Cys-417. The propeptide at 418-420 (AQQ) is removed in mature form.

The protein belongs to the DnaJ family. A/I subfamily. As to quaternary structure, homodimer. The cofactor is Zn(2+). In terms of processing, farnesylated. Roots, shoots, flowers, siliques and cotyledons.

The protein localises to the membrane. Its function is as follows. Plays a continuous role in plant development probably in the structural organization of compartments. The chain is Chaperone protein dnaJ 3 (ATJ3) from Arabidopsis thaliana (Mouse-ear cress).